Here is a 71-residue protein sequence, read N- to C-terminus: Large ribosomal subunit protein bL31 (71 aa).

Zn(2+)-binding residues include Cys16, Cys18, Cys38, and Cys41.

Belongs to the bacterial ribosomal protein bL31 family. Type A subfamily. Part of the 50S ribosomal subunit. The cofactor is Zn(2+).

In terms of biological role, binds the 23S rRNA. The protein is Large ribosomal subunit protein bL31 of Francisella tularensis subsp. novicida (strain U112).